A 277-amino-acid polypeptide reads, in one-letter code: Multiple sugar-binding transport system permease protein MsmG (277 aa).

The next 6 membrane-spanning stretches (helical) occupy residues 13–33, 74–94, 110–130, 141–161, 198–218, and 243–263; these read YVLL…TVFS, VITV…AYSI, LLIL…TVMM, LIIL…VGYI, TTLI…LLIL, and GPSF…YLIF. Residues 69-263 form the ABC transmembrane type-1 domain; that stretch reads FWNSTVITVL…ITITIVYLIF (195 aa).

This sequence belongs to the binding-protein-dependent transport system permease family. MalFG subfamily.

The protein localises to the cell membrane. Involved in a binding protein-dependent transport system responsible for the uptake of melibiose, raffinose and isomaltotriose. The protein is Multiple sugar-binding transport system permease protein MsmG (msmG) of Streptococcus mutans serotype c (strain ATCC 700610 / UA159).